A 494-amino-acid chain; its full sequence is Cytochrome P450 2A11 (494 aa).

Lysine 379 is modified (N6-acetyllysine). Position 439 (cysteine 439) interacts with heme.

It belongs to the cytochrome P450 family. It depends on heme as a cofactor. Expressed in liver and lung as well as in nasal tissues.

It is found in the endoplasmic reticulum membrane. It localises to the microsome membrane. It catalyses the reaction an organic molecule + reduced [NADPH--hemoprotein reductase] + O2 = an alcohol + oxidized [NADPH--hemoprotein reductase] + H2O + H(+). In terms of biological role, catalyzes the oxygenation of a variety of substrates, including ethanol and procarcinogens such as N-nitrosodiethylamine and phenacetin. Has no or little activity as a coumarin 7-hydroxylase and in the formation of androstenedione from testosterone. This Oryctolagus cuniculus (Rabbit) protein is Cytochrome P450 2A11 (CYP2A11).